The chain runs to 321 residues: Ferredoxin--NADP reductase (321 aa).

Residues aspartate 34, glutamine 42, tyrosine 47, valine 87, phenylalanine 119, aspartate 278, and threonine 319 each coordinate FAD.

This sequence belongs to the ferredoxin--NADP reductase type 2 family. In terms of assembly, homodimer. It depends on FAD as a cofactor.

The catalysed reaction is 2 reduced [2Fe-2S]-[ferredoxin] + NADP(+) + H(+) = 2 oxidized [2Fe-2S]-[ferredoxin] + NADPH. In Streptococcus pneumoniae serotype 4 (strain ATCC BAA-334 / TIGR4), this protein is Ferredoxin--NADP reductase.